A 507-amino-acid chain; its full sequence is UDP-N-acetylglucosamine 1-carboxyvinyltransferase 1 (507 aa).

41–42 (KN) lines the phosphoenolpyruvate pocket. Residue R112 coordinates UDP-N-acetyl-alpha-D-glucosamine. The Proton donor role is filled by C136. At C136 the chain carries 2-(S-cysteinyl)pyruvic acid O-phosphothioketal. Residues 141-145 (RPIDL), D328, and L350 contribute to the UDP-N-acetyl-alpha-D-glucosamine site.

Belongs to the EPSP synthase family. MurA subfamily.

Its subcellular location is the cytoplasm. The catalysed reaction is phosphoenolpyruvate + UDP-N-acetyl-alpha-D-glucosamine = UDP-N-acetyl-3-O-(1-carboxyvinyl)-alpha-D-glucosamine + phosphate. The protein operates within cell wall biogenesis; peptidoglycan biosynthesis. Its function is as follows. Cell wall formation. Adds enolpyruvyl to UDP-N-acetylglucosamine. This is UDP-N-acetylglucosamine 1-carboxyvinyltransferase 1 from Legionella pneumophila (strain Lens).